The following is a 139-amino-acid chain: D-ribose pyranase (139 aa).

Histidine 20 serves as the catalytic Proton donor. Substrate contacts are provided by residues aspartate 28, histidine 106, and tyrosine 128–asparagine 130.

The protein belongs to the RbsD / FucU family. RbsD subfamily. As to quaternary structure, homodecamer.

Its subcellular location is the cytoplasm. It carries out the reaction beta-D-ribopyranose = beta-D-ribofuranose. Its pathway is carbohydrate metabolism; D-ribose degradation; D-ribose 5-phosphate from beta-D-ribopyranose: step 1/2. Catalyzes the interconversion of beta-pyran and beta-furan forms of D-ribose. The sequence is that of D-ribose pyranase from Pectobacterium carotovorum subsp. carotovorum (strain PC1).